A 271-amino-acid chain; its full sequence is Extracellular metalloprotease TRV_06892 (271 aa).

Positions 1-19 are cleaved as a signal peptide; it reads MRFSVLLTGLAAAGSIATA. A glycan (N-linked (GlcNAc...) asparagine) is linked at asparagine 136. Histidine 185 provides a ligand contact to Zn(2+). Glutamate 186 is an active-site residue. Histidine 189 provides a ligand contact to Zn(2+). An N-linked (GlcNAc...) asparagine glycan is attached at asparagine 200. A disulfide bridge connects residues cysteine 222 and cysteine 248.

It belongs to the peptidase M43B family.

It is found in the secreted. Functionally, secreted metalloproteinase that allows assimilation of proteinaceous substrates. Plays a pivotal role as a pathogenicity determinant during infections and contributes to the ability of the pathogen to persist within the mammalian host. This is Extracellular metalloprotease TRV_06892 from Trichophyton verrucosum (strain HKI 0517).